A 910-amino-acid polypeptide reads, in one-letter code: Constitutive coactivator of peroxisome proliferator-activated receptor gamma (910 aa).

3 disordered regions span residues 333 to 416 (SDAE…VPMC), 443 to 483 (SEPR…ESRQ), and 863 to 910 (SHHA…WRRY). Basic and acidic residues-rich tracts occupy residues 335–351 (AESR…ESRQ), 360–375 (ESRR…EPRQ), and 396–411 (ESRR…EPRQ). The span at 872-890 (QGSSYHRTGSGYSRSSQGQ) shows a compositional bias: polar residues. Omega-N-methylarginine is present on R885. Over residues 901-910 (QYEHDQWRRY) the composition is skewed to basic and acidic residues.

Belongs to the constitutive coactivator of PPAR-gamma family. In terms of assembly, interacts with ESR1 and RXRA. Interacts with PPARG; in a ligand-independent manner. As to expression, widely expressed.

The protein resides in the nucleus. Functionally, functions as a transactivator of PPARG and ESR1. Functions in adipogenesis through PPARG activation. The sequence is that of Constitutive coactivator of peroxisome proliferator-activated receptor gamma (FAM120B) from Homo sapiens (Human).